Consider the following 275-residue polypeptide: Elongation factor Ts (275 aa).

The tract at residues 80–83 is involved in Mg(2+) ion dislocation from EF-Tu; the sequence is TDFV.

The protein belongs to the EF-Ts family.

The protein localises to the cytoplasm. Associates with the EF-Tu.GDP complex and induces the exchange of GDP to GTP. It remains bound to the aminoacyl-tRNA.EF-Tu.GTP complex up to the GTP hydrolysis stage on the ribosome. This Kineococcus radiotolerans (strain ATCC BAA-149 / DSM 14245 / SRS30216) protein is Elongation factor Ts.